The chain runs to 598 residues: MLRTHAAGSLRPADAGQTVTLAGWVARRRDHGGVIFIDLRDASGVSQVVFREGDVLAAAHRLRAEFCVAVTGVVEVRPEGNENPEIPTGQIEVNATELTVLGESAPLPFQLDEQAGEEARLKYRYLDLRREGPGNALRLRSKVNAAARSVLAEHDFVEIETPTLTRSTPEGARDFLVPARLQPGSFYALPQSPQLFKQLLMVAGMERYYQIARCYRDEDFRADRQPEFTQLDMEMSFVEADDVIAISEQVLKAVWATIGYDLPLPLPRISYEEAMRRFGSDKPDLRFGIELVECTEYFKDTTFRVFQAPYVGAVVMPGGASQPRRTLDGWQEFAKQRGHKGLAYVLVGEDGTLGGPVAKNLSDAERDGLVAHVGANPGDCIFFAAGPAKGARALLGATRIEIAKRLDLIDPNAWAFTWVVDFPMFEAADEATAAGDVAVGSGAWTAMHHAFTAPKPDSVDTFDSDPGNALSDAYDIVCNGNEIGGGSIRIHRRDIQERVFAMMGIDHDEAQEKFGFLLDAFSYGAPPHGGIAFGWDRITALLAGVDSIREVIAFPKSGGGVDPLTDAPAPITPQQRKESGIDAKPREDKPKEDAKSKA.

Position 170 (E170) interacts with L-aspartate. The interval 194–197 (QLFK) is aspartate. R216 is an L-aspartate binding site. ATP-binding positions include 216–218 (RDE) and Q225. H448 contacts L-aspartate. Position 482 (E482) interacts with ATP. R489 lines the L-aspartate pocket. 534-537 (GWDR) provides a ligand contact to ATP. The interval 558 to 598 (GGGVDPLTDAPAPITPQQRKESGIDAKPREDKPKEDAKSKA) is disordered. Residues 575-598 (QRKESGIDAKPREDKPKEDAKSKA) are compositionally biased toward basic and acidic residues.

The protein belongs to the class-II aminoacyl-tRNA synthetase family. Type 1 subfamily. As to quaternary structure, homodimer.

The protein resides in the cytoplasm. It carries out the reaction tRNA(Asx) + L-aspartate + ATP = L-aspartyl-tRNA(Asx) + AMP + diphosphate. Aspartyl-tRNA synthetase with relaxed tRNA specificity since it is able to aspartylate not only its cognate tRNA(Asp) but also tRNA(Asn). Reaction proceeds in two steps: L-aspartate is first activated by ATP to form Asp-AMP and then transferred to the acceptor end of tRNA(Asp/Asn). This is Aspartate--tRNA(Asp/Asn) ligase from Mycolicibacterium smegmatis (strain ATCC 700084 / mc(2)155) (Mycobacterium smegmatis).